The sequence spans 360 residues: Membrane-bound lytic murein transglycosylase C (360 aa).

The signal sequence occupies residues 1 to 16 (MKKLLALAVIAPLLIS). The N-palmitoyl cysteine moiety is linked to residue C17. C17 carries S-diacylglycerol cysteine lipidation.

This sequence belongs to the transglycosylase Slt family.

It is found in the cell outer membrane. It carries out the reaction Exolytic cleavage of the (1-&gt;4)-beta-glycosidic linkage between N-acetylmuramic acid (MurNAc) and N-acetylglucosamine (GlcNAc) residues in peptidoglycan, from either the reducing or the non-reducing ends of the peptidoglycan chains, with concomitant formation of a 1,6-anhydrobond in the MurNAc residue.. Murein-degrading enzyme. May play a role in recycling of muropeptides during cell elongation and/or cell division. The polypeptide is Membrane-bound lytic murein transglycosylase C (Salmonella paratyphi A (strain ATCC 9150 / SARB42)).